A 450-amino-acid chain; its full sequence is Carbamoyl phosphate synthase arginine-specific small chain (450 aa).

A mitochondrion-targeting transit peptide spans 1 to 29; that stretch reads MFAARLFKAMPARASAFPSVNASIQSRFM. Positions 220-407 constitute a Glutamine amidotransferase type-1 domain; sequence HVAVIDCGVK…LDSVRKYKAS (188 aa). C296 serves as the catalytic Nucleophile. Catalysis depends on residues H380 and E382.

This sequence belongs to the CarA family. As to quaternary structure, heterodimer composed of 2 chains; the small (or glutamine) chain promotes the hydrolysis of glutamine to ammonia, which is used by the large (or ammonia) chain to synthesize carbamoyl phosphate.

It is found in the mitochondrion matrix. It catalyses the reaction hydrogencarbonate + L-glutamine + 2 ATP + H2O = carbamoyl phosphate + L-glutamate + 2 ADP + phosphate + 2 H(+). The catalysed reaction is L-glutamine + H2O = L-glutamate + NH4(+). It participates in amino-acid biosynthesis; L-arginine biosynthesis; carbamoyl phosphate from bicarbonate: step 1/1. Small subunit of the arginine-specific carbamoyl phosphate synthase (CPSase). CPSase catalyzes the formation of carbamoyl phosphate from the ammonia moiety of glutamine, carbonate, and phosphate donated by ATP, the first step of the arginine biosynthetic pathway. The small subunit (glutamine amidotransferase) binds and cleaves glutamine to supply the large subunit with the substrate ammonia. The polypeptide is Carbamoyl phosphate synthase arginine-specific small chain (cpa1) (Aspergillus oryzae (strain ATCC 42149 / RIB 40) (Yellow koji mold)).